The chain runs to 141 residues: Nucleoside triphosphatase NudI (141 aa).

In terms of domain architecture, Nudix hydrolase spans 1–141; sequence MRQRTIVCPL…RKTLRLKGLL (141 aa). Positions 38 to 59 match the Nudix box motif; that stretch reads GGVEPGERIEEALRREIREELG.

This sequence belongs to the Nudix hydrolase family. NudI subfamily. As to quaternary structure, monomer. Requires Mg(2+) as cofactor.

It catalyses the reaction a ribonucleoside 5'-triphosphate + H2O = a ribonucleoside 5'-phosphate + diphosphate + H(+). The catalysed reaction is a 2'-deoxyribonucleoside 5'-triphosphate + H2O = a 2'-deoxyribonucleoside 5'-phosphate + diphosphate + H(+). The enzyme catalyses dUTP + H2O = dUMP + diphosphate + H(+). It carries out the reaction dTTP + H2O = dTMP + diphosphate + H(+). It catalyses the reaction dCTP + H2O = dCMP + diphosphate + H(+). Catalyzes the hydrolysis of nucleoside triphosphates, with a preference for pyrimidine deoxynucleoside triphosphates (dUTP, dTTP and dCTP). In Escherichia coli O6:K15:H31 (strain 536 / UPEC), this protein is Nucleoside triphosphatase NudI.